We begin with the raw amino-acid sequence, 145 residues long: 3-hydroxyacyl-[acyl-carrier-protein] dehydratase FabZ (145 aa).

Residue H48 is part of the active site.

Belongs to the thioester dehydratase family. FabZ subfamily.

It localises to the cytoplasm. The catalysed reaction is a (3R)-hydroxyacyl-[ACP] = a (2E)-enoyl-[ACP] + H2O. In terms of biological role, involved in unsaturated fatty acids biosynthesis. Catalyzes the dehydration of short chain beta-hydroxyacyl-ACPs and long chain saturated and unsaturated beta-hydroxyacyl-ACPs. This Marinobacter nauticus (strain ATCC 700491 / DSM 11845 / VT8) (Marinobacter aquaeolei) protein is 3-hydroxyacyl-[acyl-carrier-protein] dehydratase FabZ.